A 428-amino-acid chain; its full sequence is MLYKRSSQLFAEAEKVIPGGVNSPVRAFKAVGGTPIFVKSAKGAYLYDEDGNKLIDYINSWGPMVLGHAYQPVVDAVIEKAKLGTSFGMPTELETEIAALAVSMVPNIDKIRFVNSGTEACMSAIRLARGFTKRDKIIKFAGCYHGHSDSFLIQAGSGAVTFGSPNSPGVTEGTAKDTLLAKYNDLENVKTLIEANKGEIAAIIIEAVAGNMGCIPPAEGFLQGLRDLCTANGILLIFDEVMTGFRLARGGVQELYGIDADIVTFGKVIGGGLPVGAFAAREEIMNYLAPLGPVYQAGTLSGNPLAMAAGYAMLKALDNDREIFTRLEEKTAYLEAGIDRVLKANNVVFTINRVGSMISVHFDAGPVTDFKTAAKGDNETFKKFFHGLLQEGVYIAPSAYETWFITDALTYEDLDFTINAIDKVSKTF.

At Lys267 the chain carries N6-(pyridoxal phosphate)lysine.

It belongs to the class-III pyridoxal-phosphate-dependent aminotransferase family. HemL subfamily. As to quaternary structure, homodimer. It depends on pyridoxal 5'-phosphate as a cofactor.

It is found in the cytoplasm. The enzyme catalyses (S)-4-amino-5-oxopentanoate = 5-aminolevulinate. It functions in the pathway porphyrin-containing compound metabolism; protoporphyrin-IX biosynthesis; 5-aminolevulinate from L-glutamyl-tRNA(Glu): step 2/2. The protein is Glutamate-1-semialdehyde 2,1-aminomutase of Flavobacterium johnsoniae (strain ATCC 17061 / DSM 2064 / JCM 8514 / BCRC 14874 / CCUG 350202 / NBRC 14942 / NCIMB 11054 / UW101) (Cytophaga johnsonae).